The chain runs to 78 residues: MEGDIAEMGKFIGAGLATIGLGGAGIGVGHVAGNFLAGALRNPSAAPGQMANLFVGIAFAEALGIFSFLIALLLMFAV.

2 helical membrane passes run 11–31 and 53–73; these read FIGA…VGHV and LFVG…IALL.

It belongs to the ATPase C chain family. As to quaternary structure, F-type ATPases have 2 components, F(1) - the catalytic core - and F(0) - the membrane proton channel. F(1) has five subunits: alpha(3), beta(3), gamma(1), delta(1), epsilon(1). F(0) has four main subunits: a(1), b(1), b'(1) and c(10-14). The alpha and beta chains form an alternating ring which encloses part of the gamma chain. F(1) is attached to F(0) by a central stalk formed by the gamma and epsilon chains, while a peripheral stalk is formed by the delta, b and b' chains.

The protein localises to the cell inner membrane. In terms of biological role, f(1)F(0) ATP synthase produces ATP from ADP in the presence of a proton or sodium gradient. F-type ATPases consist of two structural domains, F(1) containing the extramembraneous catalytic core and F(0) containing the membrane proton channel, linked together by a central stalk and a peripheral stalk. During catalysis, ATP synthesis in the catalytic domain of F(1) is coupled via a rotary mechanism of the central stalk subunits to proton translocation. Its function is as follows. Key component of the F(0) channel; it plays a direct role in translocation across the membrane. A homomeric c-ring of between 10-14 subunits forms the central stalk rotor element with the F(1) delta and epsilon subunits. The chain is ATP synthase subunit c from Cereibacter sphaeroides (strain ATCC 17025 / ATH 2.4.3) (Rhodobacter sphaeroides).